The primary structure comprises 207 residues: MKTKILSLANEEVGEISLNEDIFAVEFIRDDIIKQVIDWQRAKAMSGNHKTKTVSEVLGTTKKPFKQKGTGNARQGSLRSVQMRGGGVAHGPRVRSHATKLPKKVRKLGLIHALSEKCAEGKLLVIDSLKLDKPKTSALVNILNKFQGKSFFVIDGNEVDINFSLAAKNIYNTVVVPQIGANVYDIIRHEYVLLSQEAVSVLEERLR.

This sequence belongs to the universal ribosomal protein uL4 family. Part of the 50S ribosomal subunit.

Functionally, one of the primary rRNA binding proteins, this protein initially binds near the 5'-end of the 23S rRNA. It is important during the early stages of 50S assembly. It makes multiple contacts with different domains of the 23S rRNA in the assembled 50S subunit and ribosome. In terms of biological role, forms part of the polypeptide exit tunnel. This is Large ribosomal subunit protein uL4 from Rickettsia rickettsii (strain Iowa).